The chain runs to 261 residues: MSAIPDVQSTPDTRNIVIQRVGVKGVRYPITVKTSSGVQPSVGSWNMYVRLTEEQKGTHMSRFIALLEENNQPLDVAVFGALMRKMLVLLDADAGRIEVSFPYFINKTAPVSGVQSLMDYEVGLTGEMKNGELEVTLKVLVPVTSLCPCSKKISAYGAHNQRSHITVHAVLNGDLVVEELIAKIEEQASCELYGLLKRPDEKYVTERAYDNPKFVEDLVRDVAGMLNKDERVLAYTLEAENFESIHNHSAYALIERDKRLS.

The protein belongs to the GTP cyclohydrolase IV family.

It carries out the reaction GTP + H2O = 7,8-dihydroneopterin 3'-triphosphate + formate + H(+). Its pathway is cofactor biosynthesis; 7,8-dihydroneopterin triphosphate biosynthesis; 7,8-dihydroneopterin triphosphate from GTP: step 1/1. In terms of biological role, converts GTP to 7,8-dihydroneopterin triphosphate. This Herminiimonas arsenicoxydans protein is GTP cyclohydrolase FolE2.